Reading from the N-terminus, the 230-residue chain is Urease accessory protein UreF (230 aa).

This sequence belongs to the UreF family. As to quaternary structure, ureD, UreF and UreG form a complex that acts as a GTP-hydrolysis-dependent molecular chaperone, activating the urease apoprotein by helping to assemble the nickel containing metallocenter of UreC. The UreE protein probably delivers the nickel.

It is found in the cytoplasm. Required for maturation of urease via the functional incorporation of the urease nickel metallocenter. The chain is Urease accessory protein UreF from Cupriavidus necator (strain ATCC 17699 / DSM 428 / KCTC 22496 / NCIMB 10442 / H16 / Stanier 337) (Ralstonia eutropha).